The primary structure comprises 276 residues: Ribosomal RNA small subunit methyltransferase A (276 aa).

S-adenosyl-L-methionine-binding residues include Asn-27, Leu-29, Gly-54, Glu-75, Asp-101, and Asn-123.

The protein belongs to the class I-like SAM-binding methyltransferase superfamily. rRNA adenine N(6)-methyltransferase family. RsmA subfamily.

It is found in the cytoplasm. The enzyme catalyses adenosine(1518)/adenosine(1519) in 16S rRNA + 4 S-adenosyl-L-methionine = N(6)-dimethyladenosine(1518)/N(6)-dimethyladenosine(1519) in 16S rRNA + 4 S-adenosyl-L-homocysteine + 4 H(+). Specifically dimethylates two adjacent adenosines (A1518 and A1519) in the loop of a conserved hairpin near the 3'-end of 16S rRNA in the 30S particle. May play a critical role in biogenesis of 30S subunits. The protein is Ribosomal RNA small subunit methyltransferase A of Bartonella henselae (strain ATCC 49882 / DSM 28221 / CCUG 30454 / Houston 1) (Rochalimaea henselae).